The primary structure comprises 1194 residues: Protein argonaute 3 (1194 aa).

The segment covering 1–98 (MDRGGYRGGR…GRGGGGDRGR (98 aa)) has biased composition (basic and acidic residues). 2 disordered regions span residues 1–277 (MDRG…VSQS) and 299–341 (TVLP…DKGG). Residues 142–158 (PPSSSQAQVSQGVAPGD) show a composition bias toward low complexity. Basic and acidic residues predominate over residues 167-180 (VGRDGVGDVGRDGV). The span at 181-214 (GDVGQGGVGDVGQVGVGDVGQGGVGDVGQGGVGD) shows a compositional bias: gly residues. Residues 215-228 (VGRDGVGDVGRDGV) are compositionally biased toward basic and acidic residues. Gly residues predominate over residues 229-238 (GDVGRGGVGD). 2 stretches are compositionally biased toward low complexity: residues 256–277 (QLQQ…VSQS) and 299–316 (TVLP…HTAS). Over residues 317-326 (GSQVMTPKPS) the composition is skewed to polar residues. Basic and acidic residues predominate over residues 327–341 (SSDKKEPVKRPDKGG). One can recognise a PAZ domain in the interval 540 to 656 (SVIEYLKLYF…VPMEFCNLVE (117 aa)). A Piwi domain is found at 841 to 1145 (LVLCAMTGKH…AASRGRVYYE (305 aa)).

It belongs to the argonaute family. Ago subfamily.

Involved in RNA-mediated post-transcriptional gene silencing (PTGS). Main component of the RNA-induced silencing complex (RISC) that binds to a short guide RNA such as a microRNA (miRNA) or small interfering RNA (siRNA). RISC uses the mature miRNA or siRNA as a guide for slicer-directed cleavage of homologous mRNAs to repress gene expression. The chain is Protein argonaute 3 (AGO3) from Arabidopsis thaliana (Mouse-ear cress).